We begin with the raw amino-acid sequence, 535 residues long: CTP synthase (535 aa).

An amidoligase domain region spans residues Met-1–Leu-267. Ser-13 contacts CTP. Ser-13 lines the UTP pocket. Ser-14–Ile-19 is an ATP binding site. Tyr-54 is an L-glutamine binding site. Asp-71 is an ATP binding site. Residues Asp-71 and Glu-141 each contribute to the Mg(2+) site. Residues Asp-148 to Glu-150, Lys-188 to Gln-193, and Lys-224 contribute to the CTP site. UTP-binding positions include Lys-188–Gln-193 and Lys-224. One can recognise a Glutamine amidotransferase type-1 domain in the interval Arg-292–Ser-534. Residue Gly-354 coordinates L-glutamine. Catalysis depends on Cys-381, which acts as the Nucleophile; for glutamine hydrolysis. Residues Leu-382 to Gln-385, Glu-405, and Arg-462 contribute to the L-glutamine site. Active-site residues include His-507 and Glu-509.

The protein belongs to the CTP synthase family. In terms of assembly, homotetramer.

It catalyses the reaction UTP + L-glutamine + ATP + H2O = CTP + L-glutamate + ADP + phosphate + 2 H(+). It carries out the reaction L-glutamine + H2O = L-glutamate + NH4(+). The enzyme catalyses UTP + NH4(+) + ATP = CTP + ADP + phosphate + 2 H(+). It participates in pyrimidine metabolism; CTP biosynthesis via de novo pathway; CTP from UDP: step 2/2. Allosterically activated by GTP, when glutamine is the substrate; GTP has no effect on the reaction when ammonia is the substrate. The allosteric effector GTP functions by stabilizing the protein conformation that binds the tetrahedral intermediate(s) formed during glutamine hydrolysis. Inhibited by the product CTP, via allosteric rather than competitive inhibition. In terms of biological role, catalyzes the ATP-dependent amination of UTP to CTP with either L-glutamine or ammonia as the source of nitrogen. Regulates intracellular CTP levels through interactions with the four ribonucleotide triphosphates. The chain is CTP synthase from Bacillus cytotoxicus (strain DSM 22905 / CIP 110041 / 391-98 / NVH 391-98).